The primary structure comprises 208 residues: Probable nicotinate-nucleotide adenylyltransferase (208 aa).

The protein belongs to the NadD family.

It carries out the reaction nicotinate beta-D-ribonucleotide + ATP + H(+) = deamido-NAD(+) + diphosphate. It participates in cofactor biosynthesis; NAD(+) biosynthesis; deamido-NAD(+) from nicotinate D-ribonucleotide: step 1/1. Catalyzes the reversible adenylation of nicotinate mononucleotide (NaMN) to nicotinic acid adenine dinucleotide (NaAD). In Nostoc sp. (strain PCC 7120 / SAG 25.82 / UTEX 2576), this protein is Probable nicotinate-nucleotide adenylyltransferase.